We begin with the raw amino-acid sequence, 317 residues long: Transaldolase (317 aa).

The Schiff-base intermediate with substrate role is filled by Lys132.

Belongs to the transaldolase family. Type 1 subfamily. Homodimer.

The protein resides in the cytoplasm. The enzyme catalyses D-sedoheptulose 7-phosphate + D-glyceraldehyde 3-phosphate = D-erythrose 4-phosphate + beta-D-fructose 6-phosphate. Its pathway is carbohydrate degradation; pentose phosphate pathway; D-glyceraldehyde 3-phosphate and beta-D-fructose 6-phosphate from D-ribose 5-phosphate and D-xylulose 5-phosphate (non-oxidative stage): step 2/3. In terms of biological role, transaldolase is important for the balance of metabolites in the pentose-phosphate pathway. This chain is Transaldolase, found in Shigella dysenteriae serotype 1 (strain Sd197).